Here is a 147-residue protein sequence, read N- to C-terminus: Hemoglobin subunit beta (147 aa).

The 145-residue stretch at 3-147 (EWTDSERAII…VVSALGREYH (145 aa)) folds into the Globin domain. 2 residues coordinate heme b: histidine 64 and histidine 93.

The protein belongs to the globin family. Heterotetramer of two alpha chains and two beta chains. Red blood cells.

Functionally, involved in oxygen transport from gills to the various peripheral tissues. The protein is Hemoglobin subunit beta (hbb) of Gadus morhua (Atlantic cod).